Reading from the N-terminus, the 286-residue chain is Beta-lactamase TEM (286 aa).

The N-terminal stretch at methionine 1 to alanine 23 is a signal peptide. Serine 68 functions as the Acyl-ester intermediate in the catalytic mechanism. An intrachain disulfide couples cysteine 75 to cysteine 121. The active-site Proton acceptor is glutamate 166. Residue lysine 232–glycine 234 coordinates substrate.

The protein belongs to the class-A beta-lactamase family.

It catalyses the reaction a beta-lactam + H2O = a substituted beta-amino acid. In terms of biological role, TEM-type are the most prevalent beta-lactamases in enterobacteria; they hydrolyze the beta-lactam bond in susceptible beta-lactam antibiotics, thus conferring resistance to penicillins and cephalosporins. TEM-3 and TEM-4 are capable of hydrolyzing cefotaxime and ceftazidime. TEM-5 is capable of hydrolyzing ceftazidime. TEM-6 is capable of hydrolyzing ceftazidime and aztreonam. TEM-8/CAZ-2, TEM-16/CAZ-7 and TEM-24/CAZ-6 are markedly active against ceftazidime. IRT-4 shows resistance to beta-lactamase inhibitors. This chain is Beta-lactamase TEM (bla), found in Escherichia coli.